The chain runs to 160 residues: Phosphopantetheine adenylyltransferase (160 aa).

Ser9 contributes to the substrate binding site. Residues 9–10 and His17 each bind ATP; that span reads SF. Substrate is bound by residues Lys41, Thr73, and Arg87. Residues 88–90, Glu98, and 123–129 contribute to the ATP site; these read GMR and YTFFSSS.

It belongs to the bacterial CoaD family. As to quaternary structure, homohexamer. It depends on Mg(2+) as a cofactor.

Its subcellular location is the cytoplasm. It catalyses the reaction (R)-4'-phosphopantetheine + ATP + H(+) = 3'-dephospho-CoA + diphosphate. It functions in the pathway cofactor biosynthesis; coenzyme A biosynthesis; CoA from (R)-pantothenate: step 4/5. In terms of biological role, reversibly transfers an adenylyl group from ATP to 4'-phosphopantetheine, yielding dephospho-CoA (dPCoA) and pyrophosphate. The sequence is that of Phosphopantetheine adenylyltransferase from Roseiflexus castenholzii (strain DSM 13941 / HLO8).